A 582-amino-acid chain; its full sequence is Semenogelin-2 (582 aa).

The N-terminal stretch at 1 to 23 is a signal peptide; sequence MKSIILFVLSLLLILEKQAAVMG. Residues 24–59 form a disordered region; the sequence is QKGGSKGQLPSGSSQFPHGQKGQHYFGQKDQQHTKS. Residues 31-40 are compositionally biased toward polar residues; sequence QLPSGSSQFP. 3 repeat units span residues 70–129, 141–200, and 201–260. The repeat-rich region stretch occupies residues 70–559; the sequence is HVDINDHDWT…SSESHNIVIT (490 aa). Disordered regions lie at residues 132–160, 173–194, 228–248, and 269–582; these read GGQAHHGTQNPSQDQGNSPSGKGLSSQCS, KEQASASGAQKGRTQGGSQSSY, EEHSSKLQTSLHPAHQDRLQH, and QTKN…PIST. 2 stretches are compositionally biased toward polar residues: residues 137-160 and 174-194; these read HGTQNPSQDQGNSPSGKGLSSQCS and EQASASGAQKGRTQGGSQSSY. The 4 X 60 AA tandem repeats, type I stretch occupies residues 261–500; it reads LVYNKNQHQT…QSSISFQIEK (240 aa). N272 carries an N-linked (GlcNAc...) asparagine glycan. A compositionally biased stretch (basic and acidic residues) spans 292-310; the sequence is RTEERQLHHGEKSVQKDVS. Residues 325–334 show a composition bias toward polar residues; that stretch reads KSQNQVTIHS. The span at 335 to 345 shows a compositional bias: basic and acidic residues; the sequence is QDQEHGHKENK. Residues 372–397 show a composition bias toward polar residues; it reads GSISIQTEEQIHGKSQNQVRIPSQAQ. Positions 413–426 are enriched in basic and acidic residues; it reads TEERRLNSGEKDVQ. Residues 445-455 show a composition bias toward polar residues; the sequence is KSQNQVTIPSQ. The span at 456–465 shows a compositional bias: basic and acidic residues; sequence DQEHGHKENK. Polar residues-rich tracts occupy residues 482–496 and 506–532; these read GKSTQKDVSQSSISF and SQIQTPNPNQDQWSGQNAKGKSGQSAD. The 3-2 repeat unit spans residues 501–559; it reads LVEGKSQIQTPNPNQDQWSGQNAKGKSGQSADSKQDLLSHEQKGRYKQESSESHNIVIT. 2 stretches are compositionally biased toward basic and acidic residues: residues 533–552 and 559–582; these read SKQDLLSHEQKGRYKQESSE and TEHEVAQDDHLTQQYNEDRNPIST.

Belongs to the semenogelin family. Interacts with SERPINA5. Semenogelin-2 is thought to form both the 71 kDa polypeptide and, in its glycosylated form, the 76 kDa polypeptide. In terms of tissue distribution, seminal vesicles, and to a much lesser extent, epididymis.

It localises to the secreted. Functionally, participates in the formation of a gel matrix (sperm coagulum) entrapping the accessory gland secretions and ejaculated spermatozoa. The protein is Semenogelin-2 (SEMG2) of Homo sapiens (Human).